A 74-amino-acid polypeptide reads, in one-letter code: MQTAYWVMVMMMVWITAPLSEGGKLNGEIRGLVSHILIPQHTLRSLTSRDRSDNGGSSGAQICIWKVCPPSPWR.

Positions 1–22 (MQTAYWVMVMMMVWITAPLSEG) are cleaved as a signal peptide. Positions 23–57 (GKLNGEIRGLVSHILIPQHTLRSLTSRDRSDNGGS) are excised as a propeptide. A disulfide bond links cysteine 63 and cysteine 68. Residue tryptophan 65 is modified to D-tryptophan. Proline 69, proline 70, and proline 72 each carry 4-hydroxyproline.

It belongs to the conotoxin C superfamily. Consomatin family. Expressed by the venom duct.

The protein resides in the secreted. In terms of biological role, moderately activates human somatostatin receptors (SSTR) with a preferential activation of SSTR1 and SSTR4. In vivo, does not cause behavioral changes in mice within a few minutes of intracranial injection, but causes a progressive loss of movement thereafter. Four to five hours after injection, mice recover, even with the highest dose tested. Shows antinociception and antihyperalgesia activities in two mouse models of acute pain, most probably by acting outside the central nervous system. The chain is Consomatin Ma1 from Conus magus (Magical cone).